The primary structure comprises 172 residues: Ribosome maturation factor RimM (172 aa).

The PRC barrel domain occupies D96 to L168.

Belongs to the RimM family. In terms of assembly, binds ribosomal protein uS19.

The protein resides in the cytoplasm. Its function is as follows. An accessory protein needed during the final step in the assembly of 30S ribosomal subunit, possibly for assembly of the head region. Essential for efficient processing of 16S rRNA. May be needed both before and after RbfA during the maturation of 16S rRNA. It has affinity for free ribosomal 30S subunits but not for 70S ribosomes. In Streptococcus thermophilus (strain CNRZ 1066), this protein is Ribosome maturation factor RimM.